Consider the following 261-residue polypeptide: uncharacterized protein (261 aa).

6 consecutive transmembrane segments (helical) span residues 31–51 (TFLS…TGIV), 71–91 (TNVM…SWLL), 101–121 (LAYI…AGIA), 130–150 (LTSS…ASFI), 167–187 (LLLF…IPYV), and 213–233 (FAWL…YLAI).

It is found in the cell membrane. This is an uncharacterized protein from Mycoplasma genitalium (strain ATCC 33530 / DSM 19775 / NCTC 10195 / G37) (Mycoplasmoides genitalium).